We begin with the raw amino-acid sequence, 204 residues long: Ribosomal RNA small subunit methyltransferase G (204 aa).

Residues Gly-73, Phe-78, and Arg-139 each coordinate S-adenosyl-L-methionine.

The protein belongs to the methyltransferase superfamily. RNA methyltransferase RsmG family.

It is found in the cytoplasm. It catalyses the reaction guanosine(527) in 16S rRNA + S-adenosyl-L-methionine = N(7)-methylguanosine(527) in 16S rRNA + S-adenosyl-L-homocysteine. In terms of biological role, specifically methylates the N7 position of guanine in position 527 of 16S rRNA. This chain is Ribosomal RNA small subunit methyltransferase G, found in Coxiella burnetii (strain RSA 331 / Henzerling II).